We begin with the raw amino-acid sequence, 612 residues long: Zinc metalloproteinase-disintegrin-like berythractivase (612 aa).

Positions 1 to 20 (MIQVLLVIICLEAFPYQGSS) are cleaved as a signal peptide. Residues 21–187 (IILESGNVND…EPIKKASLLN (167 aa)) constitute a propeptide that is removed on maturation. A Peptidase M12B domain is found at 200–396 (KYVEFVVVLD…NRPQCLLNKP (197 aa)). E203 is a Ca(2+) binding site. N260 carries N-linked (GlcNAc...) asparagine glycosylation. D287 is a binding site for Ca(2+). Cystine bridges form between C311–C391, C351–C375, and C353–C358. H336 lines the Zn(2+) pocket. The active site involves E337. Zn(2+) contacts are provided by H340 and H346. A glycan (N-linked (GlcNAc...) asparagine) is linked at N348. N-linked (GlcNAc...) asparagine glycosylation occurs at N374. Positions 391, 394, 406, 409, 411, 413, 416, and 419 each coordinate Ca(2+). Residues 404 to 490 (PPVCGNELLE…DCPMDDFQRN (87 aa)) enclose the Disintegrin domain. 14 cysteine pairs are disulfide-bonded: C407-C436, C418-C431, C420-C426, C430-C453, C444-C450, C449-C475, C462-C482, C469-C501, C494-C506, C513-C563, C528-C574, C541-C551, C558-C600, and C594-C605. N432 carries an N-linked (GlcNAc...) asparagine glycan. The short motif at 468–470 (DCD) is the D/ECD-tripeptide element. The Ca(2+) site is built by D470, L471, E473, and D485.

Belongs to the venom metalloproteinase (M12B) family. P-III subfamily. P-IIIa sub-subfamily. In terms of assembly, monomer. Zn(2+) is required as a cofactor. Post-translationally, highly glycosylated. Expressed by the venom gland.

It is found in the secreted. With respect to regulation, inhibited by EDTA and o-phenanthroline. Not inhibited by PMSF, benzamidine, irreversible serine-proteinase inhibitors and cysteine proteinase inhibitor E-64. In terms of biological role, potent activator of prothrombin (F2). Does not elicit any hemorrhagic response. Barely inhibits collagen-induced platelet aggregation. Binds neither collagen, nor the jararhagin monoclonal antibody MAJar3. Hydrolyzes the Aalpha-chain of fibrin and fibrinogen, without affecting the Bbeta- and gamma-chains. Is capable of triggering endothelial pro-inflammatory and procoagulant cell responses, but fails to trigger apoptosis. Induces von Willebrand factor release, and the expression of both ICAM1 and E-selectin (SELE) (without increase in VCAM1) in endothelial cells (HUVEC). Is also able to up-regulate the synthesis of the coagulation factor TF (F3). Enhances nitric oxide (NO) generation, prostacyclin production and interleukin-8 release. The chain is Zinc metalloproteinase-disintegrin-like berythractivase from Bothrops erythromelas (Caatinga lance head).